A 270-amino-acid chain; its full sequence is Small ribosomal subunit protein bS1m (270 aa).

Positions 218–250 (TKQGFKHLGPKPLAYTEKKRETTKQSTKNNVFQ) are disordered.

This sequence belongs to the bacterial ribosomal protein bS1 family.

Its subcellular location is the mitochondrion. In Marchantia polymorpha (Common liverwort), this protein is Small ribosomal subunit protein bS1m (RPS1).